Consider the following 87-residue polypeptide: U3-theraphotoxin-Hhn1e (87 aa).

Residues 1–24 form the signal peptide; the sequence is MVNMKASMFLTFAGLVLLFVVCYA. Positions 25–52 are excised as a propeptide; that stretch reads SESEEKEFPKGMLSSIFAVDNDFKQEER. 3 cysteine pairs are disulfide-bonded: Cys54–Cys67, Cys61–Cys72, and Cys66–Cys79.

The protein belongs to the neurotoxin 10 (Hwtx-1) family. 51 (Hntx-8) subfamily. Hntx-8 sub-subfamily. In terms of tissue distribution, expressed by the venom gland.

Its subcellular location is the secreted. Its function is as follows. Ion channel inhibitor. This is U3-theraphotoxin-Hhn1e from Cyriopagopus hainanus (Chinese bird spider).